We begin with the raw amino-acid sequence, 216 residues long: Dimethylamine corrinoid protein 2 (216 aa).

The region spanning Met-1–Lys-91 is the B12-binding N-terminal domain. One can recognise a B12-binding domain in the interval Leu-92–Lys-216. His-105 contacts methylcob(III)alamin.

It belongs to the methylamine corrinoid protein family.

It functions in the pathway one-carbon metabolism; methanogenesis from dimethylamine. In terms of biological role, acts as a methyl group carrier between MtbB and MtbA. The chain is Dimethylamine corrinoid protein 2 (mtbC2) from Methanosarcina acetivorans (strain ATCC 35395 / DSM 2834 / JCM 12185 / C2A).